The sequence spans 430 residues: Adenylosuccinate synthetase (430 aa).

Residues 12-18 (GDEGKGK) and 40-42 (GHT) each bind GTP. D13 acts as the Proton acceptor in catalysis. Mg(2+) is bound by residues D13 and G40. Residues 13–16 (DEGK), 38–41 (NAGH), T129, R143, Q224, T239, and R303 each bind IMP. The active-site Proton donor is H41. 299-305 (TVSNRKR) contacts substrate. GTP is bound by residues R305, 331–333 (KLD), and 413–415 (STG).

It belongs to the adenylosuccinate synthetase family. Homodimer. Requires Mg(2+) as cofactor.

Its subcellular location is the cytoplasm. The catalysed reaction is IMP + L-aspartate + GTP = N(6)-(1,2-dicarboxyethyl)-AMP + GDP + phosphate + 2 H(+). It participates in purine metabolism; AMP biosynthesis via de novo pathway; AMP from IMP: step 1/2. Functionally, plays an important role in the de novo pathway of purine nucleotide biosynthesis. Catalyzes the first committed step in the biosynthesis of AMP from IMP. The polypeptide is Adenylosuccinate synthetase (Ehrlichia chaffeensis (strain ATCC CRL-10679 / Arkansas)).